Here is a 399-residue protein sequence, read N- to C-terminus: Elongation factor Tu (399 aa).

The tr-type G domain occupies 10 to 207; it reads KTHMNVGTIG…AVDSYFPDPV (198 aa). A G1 region spans residues 19–26; sequence GHIDHGKT. 19-26 contacts GTP; sequence GHIDHGKT. Residue T26 coordinates Mg(2+). The tract at residues 60–64 is G2; it reads GITIN. The tract at residues 81–84 is G3; the sequence is DCPG. Residues 81–85 and 136–139 contribute to the GTP site; these read DCPGH and NKVD. The tract at residues 136–139 is G4; it reads NKVD. A G5 region spans residues 174–176; it reads SAL.

This sequence belongs to the TRAFAC class translation factor GTPase superfamily. Classic translation factor GTPase family. EF-Tu/EF-1A subfamily. In terms of assembly, monomer.

It localises to the cytoplasm. The catalysed reaction is GTP + H2O = GDP + phosphate + H(+). In terms of biological role, GTP hydrolase that promotes the GTP-dependent binding of aminoacyl-tRNA to the A-site of ribosomes during protein biosynthesis. The sequence is that of Elongation factor Tu from Petrotoga mobilis (strain DSM 10674 / SJ95).